The primary structure comprises 107 residues: Integration host factor subunit beta (107 aa).

Positions 76-107 are disordered; that stretch reads FVPHFKPGKELRERVDGRAGEPLKADDPDDER. Basic and acidic residues predominate over residues 82-101; sequence PGKELRERVDGRAGEPLKAD.

The protein belongs to the bacterial histone-like protein family. In terms of assembly, heterodimer of an alpha and a beta chain.

This protein is one of the two subunits of integration host factor, a specific DNA-binding protein that functions in genetic recombination as well as in transcriptional and translational control. The protein is Integration host factor subunit beta of Burkholderia cenocepacia (strain ATCC BAA-245 / DSM 16553 / LMG 16656 / NCTC 13227 / J2315 / CF5610) (Burkholderia cepacia (strain J2315)).